Here is a 322-residue protein sequence, read N- to C-terminus: Formimidoylglutamase (322 aa).

Mn(2+) contacts are provided by His-127, Asp-163, His-165, Asp-167, Asp-254, and Asp-256.

This sequence belongs to the arginase family. Requires Mn(2+) as cofactor.

The catalysed reaction is N-formimidoyl-L-glutamate + H2O = formamide + L-glutamate. Its pathway is amino-acid degradation; L-histidine degradation into L-glutamate; L-glutamate from N-formimidoyl-L-glutamate (hydrolase route): step 1/1. In terms of biological role, catalyzes the conversion of N-formimidoyl-L-glutamate to L-glutamate and formamide. This Paraburkholderia xenovorans (strain LB400) protein is Formimidoylglutamase.